A 215-amino-acid polypeptide reads, in one-letter code: Vesicle transport protein SFT2C (215 aa).

The Cytoplasmic portion of the chain corresponds to 1–82 (MADLHRQLQE…RGQRLAAGGG (82 aa)). Residues 83–103 (CLLLAALCFGLAALYAPVLLL) traverse the membrane as a helical segment. The Lumenal segment spans residues 104–107 (RARK). The helical transmembrane segment at 108-128 (FALLWSLGSALALAGSALLRG) threads the bilayer. Topologically, residues 129-142 (GAACGRLLRCEEAP) are cytoplasmic. Residues 143–163 (SRPALLYMAALGATLFAALGL) traverse the membrane as a helical segment. At 164–166 (RST) the chain is on the lumenal side. Residues 167 to 187 (LLTVLGAGAQVAALLAALVGL) form a helical membrane-spanning segment. Residues 188–215 (LPWGGGTALRLALGRLGRGAGLAKVLPV) are Cytoplasmic-facing.

This sequence belongs to the SFT2 family.

The protein localises to the membrane. Functionally, may be involved in fusion of retrograde transport vesicles derived from an endocytic compartment with the Golgi complex. This Homo sapiens (Human) protein is Vesicle transport protein SFT2C.